Here is a 198-residue protein sequence, read N- to C-terminus: MIEQFLNNLILASSSERRIALLKQINIEPGLILPADIDEIPLRKELPKDYSIRMAKSKAEKIQSSNPDYFVLGIDTVVACGRRILLKAKNIEQAEKYIRLLSGRRHRVYTSVCLLTPDRSKQHIRTVVTIVKFKRLSEREIKYYLASEEWKNRAGGCNMQGLAGMFVLFLRGSYSSIIGLPLHETYCLLSNYFNLNLY.

The Proton acceptor role is filled by D75.

It belongs to the Maf family. YhdE subfamily. Requires a divalent metal cation as cofactor.

Its subcellular location is the cytoplasm. The enzyme catalyses dTTP + H2O = dTMP + diphosphate + H(+). It carries out the reaction UTP + H2O = UMP + diphosphate + H(+). In terms of biological role, nucleoside triphosphate pyrophosphatase that hydrolyzes dTTP and UTP. May have a dual role in cell division arrest and in preventing the incorporation of modified nucleotides into cellular nucleic acids. This chain is dTTP/UTP pyrophosphatase, found in Wolbachia sp. subsp. Brugia malayi (strain TRS).